Here is a 429-residue protein sequence, read N- to C-terminus: Adenylosuccinate synthetase (429 aa).

GTP contacts are provided by residues 12–18 (GDEGKGK) and 40–42 (GHT). Asp13 acts as the Proton acceptor in catalysis. Asp13 and Gly40 together coordinate Mg(2+). IMP contacts are provided by residues 13 to 16 (DEGK), 38 to 41 (NAGH), Thr130, Arg144, Gln225, Thr240, and Arg304. The Proton donor role is filled by His41. A substrate-binding site is contributed by 300–306 (ATTGRPR). GTP is bound by residues Arg306, 332–334 (KLD), and 414–416 (SVG).

It belongs to the adenylosuccinate synthetase family. Homodimer. Mg(2+) serves as cofactor.

It is found in the cytoplasm. It catalyses the reaction IMP + L-aspartate + GTP = N(6)-(1,2-dicarboxyethyl)-AMP + GDP + phosphate + 2 H(+). It functions in the pathway purine metabolism; AMP biosynthesis via de novo pathway; AMP from IMP: step 1/2. Its function is as follows. Plays an important role in the de novo pathway of purine nucleotide biosynthesis. Catalyzes the first committed step in the biosynthesis of AMP from IMP. This Syntrophobacter fumaroxidans (strain DSM 10017 / MPOB) protein is Adenylosuccinate synthetase.